Here is a 35-residue protein sequence, read N- to C-terminus: Alpha-amanitin proprotein 2 (35 aa).

Positions 1 to 10 (MFDTNSTRLP) are excised as a propeptide. (3R,4R)-4,5-dihydroxyisoleucine; in form alpha-amanitin is present on Ile11. At Ile11 the chain carries (3R,4S)-4-hydroxyisoleucine; in form gamma-amanitin. A cross-link (cyclopeptide (Ile-Pro)) is located at residues 11-18 (IWGIGCNP). Positions 12-16 (WGIGC) form a cross-link, 2'-cysteinyl-6'-hydroxytryptophan sulfoxide (Trp-Cys). At Pro18 the chain carries 4-hydroxyproline. The propeptide occupies 19–35 (WTAEHVDQTLVSGNDIC).

Belongs to the MSDIN fungal toxin family. In terms of processing, processed by the macrocyclase-peptidase enzyme POPB to yield a toxic bicyclic octapeptide. POPB first removes 10 residues from the N-terminus. Conformational trapping of the remaining peptide forces the enzyme to release this intermediate rather than proceed to macrocyclization. The enzyme rebinds the remaining peptide in a different conformation and catalyzes macrocyclization of the N-terminal 8 residues.

Major toxin belonging to the bicyclic octapeptides amatoxins that acts by binding non-competitively to RNA polymerase II and greatly slowing the elongation of transcripts from target promoters. This chain is Alpha-amanitin proprotein 2, found in Galerina marginata (strain CBS 339.88).